Consider the following 41-residue polypeptide: Disintegrin obtustatin (41 aa).

Cystine bridges form between Cys-1/Cys-10, Cys-6/Cys-29, Cys-7/Cys-34, and Cys-19/Cys-36. In terms of domain architecture, Disintegrin spans 1–41 (CTTGPCCRQCKLKPAGTTCWKTSLTSHYCTGKSCDCPLYPG). A Cell attachment site; atypical (KTS) motif is present at residues 21-23 (KTS).

This sequence belongs to the disintegrin family. Short disintegrin subfamily. Monomer. Expressed by the venom gland.

The protein resides in the secreted. Is a potent and selective inhibitor of alpha-1/beta-1 (ITGA1/ITGB1) integrin. It blocks the adhesion of alpha-1/beta-1-expressing K562 cells to immobilized collagens IV and I with IC(50) of 2 and 0.5 nM, respectively. Potently inhibits angiogenesis in chicken and in mouse model and reduces tumor development by half. Is 25-fold less potent than viperistatin. The protein is Disintegrin obtustatin of Macrovipera lebetina obtusa (Levant blunt-nosed viper).